The chain runs to 138 residues: Phospholipase A2 homolog mojave toxin acidic chain (138 aa).

A signal peptide spans 1–40 (MRALWIVAVLLVGVEGSLVEFETLIMKIAGRSGISYYSSY). Disulfide bonds link Cys42–Cys131, Cys44–Cys60, Cys59–Cys111, Cys65–Cys138, Cys66–Cys104, Cys73–Cys97, and Cys91–Cys102. Residues 81–83 (TYR) constitute a propeptide that is removed on maturation. Gln84 is subject to Pyrrolidone carboxylic acid. A propeptide spanning residues 120–126 (DYKYLRF) is cleaved from the precursor.

The protein belongs to the phospholipase A2 family. Group II subfamily. D49 sub-subfamily. As to quaternary structure, heterodimer of an acidic and a basic chain. The acidic subunit is non-toxic, without enzymatic activity and comprises 3 peptides that are cross-linked by 5 disulfide bridges. The basic subunit is toxic, has phospholipase A2 activity and is composed of a single chain. Ca(2+) is required as a cofactor. As to expression, expressed by the venom gland.

Its subcellular location is the secreted. Its function is as follows. Snake venom phospholipase A2 (PLA2) that inhibits neuromuscular transmission by blocking acetylcholine release from the nerve termini. In Crotalus scutulatus scutulatus (Mojave rattlesnake), this protein is Phospholipase A2 homolog mojave toxin acidic chain.